A 289-amino-acid chain; its full sequence is Diaminopimelate epimerase (289 aa).

Residues Asn-13, Gln-47, and Asn-67 each contribute to the substrate site. The active-site Proton donor is the Cys-76. Residues 77 to 78 (GN), Asn-167, Asn-200, and 218 to 219 (ER) each bind substrate. The active-site Proton acceptor is the Cys-227. Substrate is bound at residue 228–229 (GT).

Belongs to the diaminopimelate epimerase family. Homodimer.

Its subcellular location is the cytoplasm. It catalyses the reaction (2S,6S)-2,6-diaminopimelate = meso-2,6-diaminopimelate. It participates in amino-acid biosynthesis; L-lysine biosynthesis via DAP pathway; DL-2,6-diaminopimelate from LL-2,6-diaminopimelate: step 1/1. Catalyzes the stereoinversion of LL-2,6-diaminopimelate (L,L-DAP) to meso-diaminopimelate (meso-DAP), a precursor of L-lysine and an essential component of the bacterial peptidoglycan. The polypeptide is Diaminopimelate epimerase (Burkholderia ambifaria (strain ATCC BAA-244 / DSM 16087 / CCUG 44356 / LMG 19182 / AMMD) (Burkholderia cepacia (strain AMMD))).